The sequence spans 243 residues: Protein GIGAS CELL1 (243 aa).

Interacts with APC/C activators such as FZR1, FZR2, FZR3, CDC20.1 and CDC20.5. Post-translationally, phosphorylated by CDKA-1 in complex with CYCA1-2. Expressed in rapidly dividing tissues such as shoot apical meristem and young leaves. Associated with cell division but also with specific cell types.

Negative regulator of the anaphase-promoting complex/cyclosome (APC/C) ubiquitin ligase required for proper mitotic and meiotic progression and cell fate determination. Involved in entry into both meiosis I and meiosis II. Prevents endomitosis by preferentially inhibiting APC/C(CDC20). Required for megagametophyte and endosperm development. Triggers mitotic cyclins (e.g. CYCB1-1 and CYCB1-2) accumulation. Confers immunity to bacterial pathogens (e.g. Pseudomonas syringae pv. tomato DC3000), which is associated with increased expression of disease resistance (R) genes. GIG1 and PANS1 are part of a network linking centromere cohesion and cell cycle progression through control of APC/C activity. This is Protein GIGAS CELL1 (GIG1) from Arabidopsis thaliana (Mouse-ear cress).